The sequence spans 287 residues: ATP synthase gamma chain (287 aa).

The protein belongs to the ATPase gamma chain family. F-type ATPases have 2 components, CF(1) - the catalytic core - and CF(0) - the membrane proton channel. CF(1) has five subunits: alpha(3), beta(3), gamma(1), delta(1), epsilon(1). CF(0) has three main subunits: a, b and c.

Its subcellular location is the cell inner membrane. Functionally, produces ATP from ADP in the presence of a proton gradient across the membrane. The gamma chain is believed to be important in regulating ATPase activity and the flow of protons through the CF(0) complex. In Baumannia cicadellinicola subsp. Homalodisca coagulata, this protein is ATP synthase gamma chain.